We begin with the raw amino-acid sequence, 499 residues long: Sensor histidine kinase VxrA (499 aa).

At 1 to 12 the chain is on the cytoplasmic side; it reads MRYSFCMLEKTN. A helical transmembrane segment spans residues 13–31; sequence IPLIRALNLTLVSLCFAML. The Periplasmic segment spans residues 32–257; the sequence is PNPVHADSLP…ICWDVEDHSD (226 aa). Intrachain disulfides connect C101/C122 and C241/C249. Residues 258-280 traverse the membrane as a helical segment; the sequence is LLRTSMIILVIANIFLVLGWSGY. Topologically, residues 281–499 are cytoplasmic; that stretch reads RWNSKRQEMR…IPCETDTASR (219 aa). Residues 298–494 enclose the Histidine kinase domain; it reads ILTHELRTPI…TFILEIPCET (197 aa). H301 is modified (phosphohistidine; by autocatalysis).

Homodimer. In terms of processing, autophosphorylated. Contains two disulfide bonds that may play a role in the stability of the protein. However, the disulfide bonds are not absolutely essential, as some activity and growth are detected in the absence of each disulfide bond.

The protein localises to the cell inner membrane. It catalyses the reaction ATP + protein L-histidine = ADP + protein N-phospho-L-histidine.. Functionally, member of the two-component regulatory system VxrB/VxrA involved in the regulation of diverses processes, including virulence, the type VI secretion system (T6SS) and biofilm formation. Functions as a sensor protein kinase which is autophosphorylated at a histidine residue and transfers its phosphate group to the conserved aspartic acid residue in the regulatory domain of VxrB. Is critical for colonization in the infant mouse model. Contributes to the resistance to beta-lactam treatment. The chain is Sensor histidine kinase VxrA from Vibrio cholerae serotype O1 (strain ATCC 39315 / El Tor Inaba N16961).